The primary structure comprises 369 residues: MHGESPIKRRESRKIWVGNVPVGGDAPIAVQSMTNTDTNDVAATVGQIQRLVDAGVDIVRVSVPDMDAAEAFGKIKQLVSVPLVADIHFDYKIALRVAELGVDCLRINPGNIGREDRVRAVVDAARDRGIPIRIGVNAGSLEKDLQKKYGEPTPAALVESALRHVEHLDRLDFQDFKVSVKASDVFMAVEAYRLLAKQIIQPLHLGITEAGGLRSGTVKSAVGLGMLLAEGIGDTIRISLAADPVEEVKVGYDILKSLHLRSRGINFIACPSCSRQNFDVVKTMNELEGRLEDLLVPLDVAVIGCVVNGPGEAKEAHVGLTGGTPNLIYIDGKPAQKLTNDNLVDELEKLIRQKAAEKVEADAALIARG.

[4Fe-4S] cluster-binding residues include Cys-270, Cys-273, Cys-305, and Glu-312.

Belongs to the IspG family. The cofactor is [4Fe-4S] cluster.

It catalyses the reaction (2E)-4-hydroxy-3-methylbut-2-enyl diphosphate + oxidized [flavodoxin] + H2O + 2 H(+) = 2-C-methyl-D-erythritol 2,4-cyclic diphosphate + reduced [flavodoxin]. It participates in isoprenoid biosynthesis; isopentenyl diphosphate biosynthesis via DXP pathway; isopentenyl diphosphate from 1-deoxy-D-xylulose 5-phosphate: step 5/6. Its function is as follows. Converts 2C-methyl-D-erythritol 2,4-cyclodiphosphate (ME-2,4cPP) into 1-hydroxy-2-methyl-2-(E)-butenyl 4-diphosphate. This chain is 4-hydroxy-3-methylbut-2-en-1-yl diphosphate synthase (flavodoxin), found in Pseudomonas putida (strain W619).